We begin with the raw amino-acid sequence, 356 residues long: UDP-N-acetylglucosamine--N-acetylmuramyl-(pentapeptide) pyrophosphoryl-undecaprenol N-acetylglucosamine transferase (356 aa).

UDP-N-acetyl-alpha-D-glucosamine-binding positions include 13–15, Asn125, Arg161, Ser189, Ile243, and Gln288; that span reads TGG.

This sequence belongs to the glycosyltransferase 28 family. MurG subfamily.

It is found in the cell inner membrane. The catalysed reaction is di-trans,octa-cis-undecaprenyl diphospho-N-acetyl-alpha-D-muramoyl-L-alanyl-D-glutamyl-meso-2,6-diaminopimeloyl-D-alanyl-D-alanine + UDP-N-acetyl-alpha-D-glucosamine = di-trans,octa-cis-undecaprenyl diphospho-[N-acetyl-alpha-D-glucosaminyl-(1-&gt;4)]-N-acetyl-alpha-D-muramoyl-L-alanyl-D-glutamyl-meso-2,6-diaminopimeloyl-D-alanyl-D-alanine + UDP + H(+). It participates in cell wall biogenesis; peptidoglycan biosynthesis. Cell wall formation. Catalyzes the transfer of a GlcNAc subunit on undecaprenyl-pyrophosphoryl-MurNAc-pentapeptide (lipid intermediate I) to form undecaprenyl-pyrophosphoryl-MurNAc-(pentapeptide)GlcNAc (lipid intermediate II). The sequence is that of UDP-N-acetylglucosamine--N-acetylmuramyl-(pentapeptide) pyrophosphoryl-undecaprenol N-acetylglucosamine transferase from Cupriavidus metallidurans (strain ATCC 43123 / DSM 2839 / NBRC 102507 / CH34) (Ralstonia metallidurans).